A 51-amino-acid polypeptide reads, in one-letter code: MAVPKKRTSISKKRIRKTIWKKKAYWASLKAFSLAKSLSTGNSKSFFYSKF.

Belongs to the bacterial ribosomal protein bL32 family.

The protein resides in the plastid. The protein localises to the chloroplast. The polypeptide is Large ribosomal subunit protein bL32c (Oenothera elata subsp. hookeri (Hooker's evening primrose)).